Reading from the N-terminus, the 664-residue chain is Intraflagellar transport protein 70A2 (664 aa).

TPR repeat units lie at residues 11–44, 45–78, 153–186, 188–220, 395–423, 424–456, and 458–491; these read DGEF…SPRS, RAGL…HPEL, PDGL…SGYQ, DVSY…GIRQ, QVQE…EKYI, PVLM…CNDH, and VWKL…NYDN. Residues 507-534 adopt a coiled-coil conformation; it reads YIMTSQNEEAEELMRKIEKEEEQLSYGD. The stretch at 543–576 is one TPR 8 repeat; sequence CIVNLVIGTLYCAKGNYDFGISRVIKSLEPYHKK.

This sequence belongs to the TTC30/dfy-1/fleer family. Interacts wit the IFT B complex component IFT52.

It localises to the cell projection. Its subcellular location is the cilium. Its function is as follows. Required for polyglutamylation of axonemal tubulin. Plays a role in anterograde intraflagellar transport (IFT), the process by which cilia precursors are transported from the base of the cilium to the site of their incorporation at the tip. This Rattus norvegicus (Rat) protein is Intraflagellar transport protein 70A2 (Ift70a2).